Consider the following 341-residue polypeptide: Twinfilin-2 (341 aa).

2 consecutive ADF-H domains span residues 1 to 131 (ATEE…KHLS) and 169 to 305 (GLAF…DEVH). N6-acetyllysine is present on Lys-6. The residue at position 301 (Tyr-301) is a Phosphotyrosine. The interval 314-341 (AFAKPKGPGGKRGHKRLIRGPGENGDDS) is disordered. Over residues 322-331 (GGKRGHKRLI) the composition is skewed to basic residues. Ser-341 carries the phosphoserine modification.

The protein belongs to the actin-binding proteins ADF family. Twinfilin subfamily. In terms of assembly, interacts with G-actin; ADP-actin form and capping protein (CP). May also be able to interact with TWF1 and phosphoinositides, PI(4,5)P2. When bound to PI(4,5)P2, it is down-regulated. Interacts with MYO7A. Phosphorylated on both serine and threonine residues.

The protein resides in the cytoplasm. Its subcellular location is the cytoskeleton. It localises to the perinuclear region. It is found in the cell projection. The protein localises to the stereocilium. Its function is as follows. Actin-binding protein involved in motile and morphological processes. Inhibits actin polymerization, likely by sequestering G-actin. By capping the barbed ends of filaments, it also regulates motility. Seems to play an important role in clathrin-mediated endocytosis and distribution of endocytic organelles. May play a role in regulating the mature length of the middle and short rows of stereocilia. The polypeptide is Twinfilin-2 (TWF2) (Pongo abelii (Sumatran orangutan)).